The sequence spans 184 residues: Large ribosomal subunit protein uL10 (184 aa).

The protein belongs to the universal ribosomal protein uL10 family. As to quaternary structure, part of the ribosomal stalk of the 50S ribosomal subunit. The N-terminus interacts with L11 and the large rRNA to form the base of the stalk. The C-terminus forms an elongated spine to which L12 dimers bind in a sequential fashion forming a multimeric L10(L12)X complex.

Its function is as follows. Forms part of the ribosomal stalk, playing a central role in the interaction of the ribosome with GTP-bound translation factors. This is Large ribosomal subunit protein uL10 from Gluconobacter oxydans (strain 621H) (Gluconobacter suboxydans).